The sequence spans 212 residues: Lipid A acyltransferase PagP (212 aa).

The signal sequence occupies residues 1–24 (MYLKRTLITLSLITLPIVPFLSYA). Positions 36 to 47 (NLAPVTVDSSDP) are enriched in polar residues. A disordered region spans residues 36–56 (NLAPVTVDSSDPVSDKQGESW). Catalysis depends on residues H84, D127, and S128.

Belongs to the lipid A palmitoyltransferase family. In terms of assembly, homodimer.

The protein localises to the cell outer membrane. It catalyses the reaction a lipid A + a 1,2-diacyl-sn-glycero-3-phosphocholine = a hepta-acyl lipid A + a 2-acyl-sn-glycero-3-phosphocholine. The enzyme catalyses a lipid IVA + a 1,2-diacyl-sn-glycero-3-phosphocholine = a lipid IVB + a 2-acyl-sn-glycero-3-phosphocholine. The catalysed reaction is a lipid IIA + a 1,2-diacyl-sn-glycero-3-phosphocholine = a lipid IIB + a 2-acyl-sn-glycero-3-phosphocholine. In terms of biological role, transfers a fatty acid residue from the sn-1 position of a phospholipid to the N-linked hydroxyfatty acid chain on the proximal unit of lipid A or its precursors. This is Lipid A acyltransferase PagP from Pectobacterium carotovorum subsp. carotovorum (strain PC1).